A 97-amino-acid chain; its full sequence is Putative defensin-like protein 240 (97 aa).

The first 23 residues, 1-23, serve as a signal peptide directing secretion; the sequence is MRYTTSFIVFCFYIFLFTNLVQG. Disulfide bonds link Cys-29/Cys-88, Cys-39/Cys-69, Cys-47/Cys-85, and Cys-67/Cys-87.

The protein belongs to the DEFL family.

It is found in the secreted. The chain is Putative defensin-like protein 240 (SCRL18) from Arabidopsis thaliana (Mouse-ear cress).